The following is an 859-amino-acid chain: Chitin synthase 1 (859 aa).

The tract at residues 1–22 (MRRWFKKTLPRPPDEEESAGLT) is disordered. The next 5 membrane-spanning stretches (helical) occupy residues 544-564 (LATI…FYIL), 615-635 (MVIM…WIAY), 662-682 (FINI…VSII), 793-813 (YVVL…LSIP), and 833-853 (LWSV…YLFI).

This sequence belongs to the chitin synthase family.

It localises to the cell membrane. The enzyme catalyses [(1-&gt;4)-N-acetyl-beta-D-glucosaminyl](n) + UDP-N-acetyl-alpha-D-glucosamine = [(1-&gt;4)-N-acetyl-beta-D-glucosaminyl](n+1) + UDP + H(+). Its function is as follows. Polymerizes chitin, a structural polymer of the cell wall and septum, by transferring the sugar moiety of UDP-GlcNAc to the non-reducing end of the growing chitin polymer. The sequence is that of Chitin synthase 1 (chs1) from Schizosaccharomyces pombe (strain 972 / ATCC 24843) (Fission yeast).